The sequence spans 200 residues: Protein GrpE (200 aa).

The protein belongs to the GrpE family. In terms of assembly, homodimer.

Its subcellular location is the cytoplasm. Its function is as follows. Participates actively in the response to hyperosmotic and heat shock by preventing the aggregation of stress-denatured proteins, in association with DnaK and GrpE. It is the nucleotide exchange factor for DnaK and may function as a thermosensor. Unfolded proteins bind initially to DnaJ; upon interaction with the DnaJ-bound protein, DnaK hydrolyzes its bound ATP, resulting in the formation of a stable complex. GrpE releases ADP from DnaK; ATP binding to DnaK triggers the release of the substrate protein, thus completing the reaction cycle. Several rounds of ATP-dependent interactions between DnaJ, DnaK and GrpE are required for fully efficient folding. This Shewanella piezotolerans (strain WP3 / JCM 13877) protein is Protein GrpE.